The sequence spans 455 residues: Chromosomal replication initiator protein DnaA (455 aa).

The segment at 1 to 75 (MDTNNNIEKE…EILSQNKVGM (75 aa)) is domain I, interacts with DnaA modulators. The domain II stretch occupies residues 75–106 (MHLAHSVDVRIEVAPKIQINAQANINYKAIKT). The segment at 107-321 (SVKDSYTFEN…GAIIKISVNA (215 aa)) is domain III, AAA+ region. ATP-binding residues include Gly-151, Gly-153, Lys-154, and Thr-155. The interval 322–455 (NLMNAPIDLN…DKKTAFNSSE (134 aa)) is domain IV, binds dsDNA.

It belongs to the DnaA family. Oligomerizes as a right-handed, spiral filament on DNA at oriC.

Its subcellular location is the cytoplasm. Functionally, plays an essential role in the initiation and regulation of chromosomal replication. ATP-DnaA binds to the origin of replication (oriC) to initiate formation of the DNA replication initiation complex once per cell cycle. Binds the DnaA box (a 9 base pair repeat at the origin) and separates the double-stranded (ds)DNA. Forms a right-handed helical filament on oriC DNA; dsDNA binds to the exterior of the filament while single-stranded (ss)DNA is stabiized in the filament's interior. The ATP-DnaA-oriC complex binds and stabilizes one strand of the AT-rich DNA unwinding element (DUE), permitting loading of DNA polymerase. After initiation quickly degrades to an ADP-DnaA complex that is not apt for DNA replication. Binds acidic phospholipids. This chain is Chromosomal replication initiator protein DnaA, found in Helicobacter pylori (strain G27).